A 41-amino-acid chain; its full sequence is Photosystem I reaction center subunit IX (41 aa).

The helical transmembrane segment at 7–27 (YLSTVPVVFAIWLTFTAGLII) threads the bilayer.

Belongs to the PsaJ family.

The protein resides in the plastid. It is found in the chloroplast thylakoid membrane. May help in the organization of the PsaE and PsaF subunits. This chain is Photosystem I reaction center subunit IX, found in Bigelowiella natans (Pedinomonas minutissima).